Consider the following 493-residue polypeptide: Glutamate--tRNA ligase (493 aa).

Positions 10-20 match the 'HIGH' region motif; the sequence is PSPTGDPHVGT. A 'KMSKS' region motif is present at residues 251-255; that stretch reads KLSKR. Lys254 lines the ATP pocket.

It belongs to the class-I aminoacyl-tRNA synthetase family. Glutamate--tRNA ligase type 1 subfamily. In terms of assembly, monomer.

It localises to the cytoplasm. It catalyses the reaction tRNA(Glu) + L-glutamate + ATP = L-glutamyl-tRNA(Glu) + AMP + diphosphate. Catalyzes the attachment of glutamate to tRNA(Glu) in a two-step reaction: glutamate is first activated by ATP to form Glu-AMP and then transferred to the acceptor end of tRNA(Glu). The polypeptide is Glutamate--tRNA ligase (Pseudomonas savastanoi pv. phaseolicola (strain 1448A / Race 6) (Pseudomonas syringae pv. phaseolicola (strain 1448A / Race 6))).